The primary structure comprises 938 residues: Nitrate reductase (938 aa).

The 4Fe-4S Mo/W bis-MGD-type domain occupies 1 to 64 (MSVVQSSCAY…RLLDSLAQPN (64 aa)). 4 residues coordinate [4Fe-4S] cluster: Cys8, Cys11, Cys15, and Cys50.

This sequence belongs to the prokaryotic molybdopterin-containing oxidoreductase family. NasA/NapA/NarB subfamily. [4Fe-4S] cluster serves as cofactor. Requires Mo-bis(molybdopterin guanine dinucleotide) as cofactor.

The protein localises to the cytoplasm. It carries out the reaction nitrate + a quinol = a quinone + nitrite + H2O. Its pathway is nitrogen metabolism; nitrate reduction (assimilation). Its function is as follows. Nitrate reductase is a key enzyme involved in the first step of nitrate assimilation in plants, fungi and bacteria. In Shewanella frigidimarina (strain NCIMB 400), this protein is Nitrate reductase.